The following is a 381-amino-acid chain: Chaperone protein DnaJ (381 aa).

The region spanning 5-70 is the J domain; sequence DFYEVLGVSR…QKKAAYDQYG (66 aa). The CR-type zinc finger occupies 136–214; it reads GVTKEIEVPT…CHGQGRKQKT (79 aa). Residues Cys-149, Cys-152, Cys-166, Cys-169, Cys-188, Cys-191, Cys-202, and Cys-205 each coordinate Zn(2+). CXXCXGXG motif repeat units follow at residues 149-156, 166-173, 188-195, and 202-209; these read CDSCDGSG, CGTCHGHG, CPTCHGKG, and CNECHGQG.

This sequence belongs to the DnaJ family. Homodimer. Requires Zn(2+) as cofactor.

The protein localises to the cytoplasm. Its function is as follows. Participates actively in the response to hyperosmotic and heat shock by preventing the aggregation of stress-denatured proteins and by disaggregating proteins, also in an autonomous, DnaK-independent fashion. Unfolded proteins bind initially to DnaJ; upon interaction with the DnaJ-bound protein, DnaK hydrolyzes its bound ATP, resulting in the formation of a stable complex. GrpE releases ADP from DnaK; ATP binding to DnaK triggers the release of the substrate protein, thus completing the reaction cycle. Several rounds of ATP-dependent interactions between DnaJ, DnaK and GrpE are required for fully efficient folding. Also involved, together with DnaK and GrpE, in the DNA replication of plasmids through activation of initiation proteins. This chain is Chaperone protein DnaJ, found in Vibrio parahaemolyticus serotype O3:K6 (strain RIMD 2210633).